The primary structure comprises 565 residues: NAD-dependent malic enzyme (565 aa).

Catalysis depends on tyrosine 104, which acts as the Proton donor. Arginine 157 contacts NAD(+). Lysine 175 (proton acceptor) is an active-site residue. A divalent metal cation is bound by residues glutamate 246, aspartate 247, and aspartate 270. NAD(+)-binding residues include aspartate 270 and asparagine 418.

This sequence belongs to the malic enzymes family. In terms of assembly, homotetramer. Requires Mg(2+) as cofactor. It depends on Mn(2+) as a cofactor.

The catalysed reaction is (S)-malate + NAD(+) = pyruvate + CO2 + NADH. The enzyme catalyses oxaloacetate + H(+) = pyruvate + CO2. The protein is NAD-dependent malic enzyme of Escherichia coli O9:H4 (strain HS).